A 219-amino-acid polypeptide reads, in one-letter code: Capsid protein (219 aa).

A nuclear localization signals region spans residues arginine 5–arginine 29.

The protein belongs to the circoviridae capsid protein family. As to quaternary structure, homomultimer. Assembles in the nucleus, presumably in an immature form, then migrates to the cytoplasm once assembled as mature virion. Interacts with Rep; this interaction relocates Rep into the nucleus.

It localises to the host nucleus. The protein resides in the virion. Its function is as follows. Self-assembles to form the virion icosahedral capsid with a T=1 symmetry. This very small capsid (17-22 nm in diameter) allows the virus to be very stable in the environment and resistant to some disinfectants, including detergents. Essential for the initial attachment to heparan sulfate moieties and chondroitin sulfate B of the host cell surface proteoglycans. After attachment, the virus is endocytosed and traffics to the nucleus. The capsid protein binds and transports the viral genome and Rep across the nuclear envelope. The chain is Capsid protein (Cap) from Homo sapiens (Human).